A 398-amino-acid polypeptide reads, in one-letter code: Acetate kinase (398 aa).

Asn10 lines the Mg(2+) pocket. Lys17 contributes to the ATP binding site. Residue Arg91 coordinates substrate. The active-site Proton donor/acceptor is Asp148. ATP is bound by residues 208-212 (HLGNG), 283-285 (DCR), and 331-335 (GIGEN). Residue Glu385 coordinates Mg(2+).

This sequence belongs to the acetokinase family. As to quaternary structure, homodimer. The cofactor is Mg(2+). Requires Mn(2+) as cofactor.

It is found in the cytoplasm. The catalysed reaction is acetate + ATP = acetyl phosphate + ADP. It functions in the pathway metabolic intermediate biosynthesis; acetyl-CoA biosynthesis; acetyl-CoA from acetate: step 1/2. Functionally, catalyzes the formation of acetyl phosphate from acetate and ATP. Can also catalyze the reverse reaction. This chain is Acetate kinase, found in Shewanella woodyi (strain ATCC 51908 / MS32).